The chain runs to 247 residues: LHFPL tetraspan subfamily member 4 protein (247 aa).

Helical transmembrane passes span 22-42 (IGVL…VVFI), 97-117 (FFVL…ALFF), 127-147 (ICAW…MIFP), and 178-198 (ILAI…FVLG).

This sequence belongs to the LHFP family. In terms of assembly, interacts with GABA(A) receptor subunits. Interacts with GABRB3. Interacts with GABRA2. Interacts with GABRG2. Identified in a complex of 720 kDa composed of LHFPL4, NLGN2, GABRA1, GABRB2, GABRG2 and GABRB3. Interacts with GABRA1. Interacts with NLGN2; leading to mutual regulation of protein level and synaptic clustering.

It is found in the cell projection. Its subcellular location is the dendrite. The protein localises to the postsynaptic cell membrane. Its function is as follows. Plays a role in the regulation of inhibitory synapse formation and function by being involved in maintening gamma-aminobutyric acid receptors (GABAARs) clustering and their associated scaffold proteins at inhibitory synaptic sites. Acts in concert with NLGN2 to recruit or stabilize GABAARs. The protein is LHFPL tetraspan subfamily member 4 protein of Bos taurus (Bovine).